Consider the following 352-residue polypeptide: Ion-translocating oxidoreductase complex subunit D (352 aa).

A run of 4 helical transmembrane segments spans residues 20–40 (IMLL…WFFG), 42–62 (GTLF…AIVL), 69–91 (VASH…SIPP), and 123–143 (PAMI…TSWL). At T187 the chain carries FMN phosphoryl threonine. 5 helical membrane-spanning segments follow: residues 215–235 (LAGV…VFLL), 242–262 (WHIP…GWLF), 267–287 (LASP…FFIL), 301–321 (LIFG…GGYP), and 322–342 (DGVA…DYYT).

Belongs to the NqrB/RnfD family. The complex is composed of six subunits: RsxA, RsxB, RsxC, RsxD, RsxE and RsxG. Requires FMN as cofactor.

Its subcellular location is the cell inner membrane. Functionally, part of a membrane-bound complex that couples electron transfer with translocation of ions across the membrane. Required to maintain the reduced state of SoxR. This is Ion-translocating oxidoreductase complex subunit D from Salmonella paratyphi A (strain ATCC 9150 / SARB42).